Consider the following 453-residue polypeptide: Ribosomal protein uS12 methylthiotransferase RimO (453 aa).

The MTTase N-terminal domain maps to 6–116; sequence PKVGFVSLGC…VMEAVHEALP (111 aa). The [4Fe-4S] cluster site is built by Cys15, Cys51, Cys80, Cys147, Cys151, and Cys154. One can recognise a Radical SAM core domain in the interval 133–370; it reads LTPRHYAYLK…MEKQAQISAA (238 aa). The region spanning 373–441 is the TRAM domain; the sequence is EAKIGTVQQC…DHDLYGDALP (69 aa).

Belongs to the methylthiotransferase family. RimO subfamily. It depends on [4Fe-4S] cluster as a cofactor.

The protein localises to the cytoplasm. The catalysed reaction is L-aspartate(89)-[ribosomal protein uS12]-hydrogen + (sulfur carrier)-SH + AH2 + 2 S-adenosyl-L-methionine = 3-methylsulfanyl-L-aspartate(89)-[ribosomal protein uS12]-hydrogen + (sulfur carrier)-H + 5'-deoxyadenosine + L-methionine + A + S-adenosyl-L-homocysteine + 2 H(+). Its function is as follows. Catalyzes the methylthiolation of an aspartic acid residue of ribosomal protein uS12. This Stenotrophomonas maltophilia (strain R551-3) protein is Ribosomal protein uS12 methylthiotransferase RimO.